Here is a 176-residue protein sequence, read N- to C-terminus: Ribosome maturation factor RimM (176 aa).

The PRC barrel domain maps to 100 to 172 (PDTYYDHQLV…IVEIDPPHGL (73 aa)).

The protein belongs to the RimM family. Binds ribosomal protein uS19.

The protein resides in the cytoplasm. Its function is as follows. An accessory protein needed during the final step in the assembly of 30S ribosomal subunit, possibly for assembly of the head region. Essential for efficient processing of 16S rRNA. May be needed both before and after RbfA during the maturation of 16S rRNA. It has affinity for free ribosomal 30S subunits but not for 70S ribosomes. The sequence is that of Ribosome maturation factor RimM from Mycobacterium bovis (strain ATCC BAA-935 / AF2122/97).